The primary structure comprises 407 residues: Argininosuccinate synthase (407 aa).

ATP contacts are provided by residues 16–24 (AYSGGLDTS) and alanine 44. L-citrulline-binding residues include tyrosine 96 and serine 101. Glycine 126 is a binding site for ATP. L-aspartate-binding residues include threonine 128, asparagine 132, and aspartate 133. An L-citrulline-binding site is contributed by asparagine 132. L-citrulline-binding residues include arginine 136, serine 185, serine 194, glutamate 270, and tyrosine 282.

The protein belongs to the argininosuccinate synthase family. Type 1 subfamily. As to quaternary structure, homotetramer.

It is found in the cytoplasm. The enzyme catalyses L-citrulline + L-aspartate + ATP = 2-(N(omega)-L-arginino)succinate + AMP + diphosphate + H(+). It participates in amino-acid biosynthesis; L-arginine biosynthesis; L-arginine from L-ornithine and carbamoyl phosphate: step 2/3. The protein is Argininosuccinate synthase of Shewanella sp. (strain W3-18-1).